Reading from the N-terminus, the 100-residue chain is Large ribosomal subunit protein uL23 (100 aa).

The protein belongs to the universal ribosomal protein uL23 family. Part of the 50S ribosomal subunit. Contacts protein L29, and trigger factor when it is bound to the ribosome.

In terms of biological role, one of the early assembly proteins it binds 23S rRNA. One of the proteins that surrounds the polypeptide exit tunnel on the outside of the ribosome. Forms the main docking site for trigger factor binding to the ribosome. The chain is Large ribosomal subunit protein uL23 from Lactobacillus acidophilus (strain ATCC 700396 / NCK56 / N2 / NCFM).